The sequence spans 596 residues: Fructan 1-exohydrolase w2 (596 aa).

The signal sequence occupies residues 1-20 (MAQAWAFLLPVLVLGSYVTS). D75 is an active-site residue. N-linked (GlcNAc...) asparagine glycans are attached at residues N168, N236, and N248. An intrachain disulfide couples C446 to C492. N567 is a glycosylation site (N-linked (GlcNAc...) asparagine).

Belongs to the glycosyl hydrolase 32 family.

The enzyme catalyses Hydrolysis of terminal, non-reducing (2-&gt;1)-linked beta-D-fructofuranose residues in fructans.. Its activity is regulated as follows. Inhibited by sucrose. In terms of biological role, hydrolyzes inulin-type beta-(2,1)-fructans, but not beta-(2,1)-linkages in branched fructans. Has low activity against beta-(2,6)-linked fructans. May play a role as a beta-(2,1)-trimmer during graminan biosynthesis. This chain is Fructan 1-exohydrolase w2, found in Triticum aestivum (Wheat).